We begin with the raw amino-acid sequence, 222 residues long: UPF0316 protein Mboo_0791 (222 aa).

Transmembrane regions (helical) follow at residues 25–45 (FFLF…IFLA), 67–87 (LAPV…VGVL), and 93–113 (IAYF…GLVI).

This sequence belongs to the UPF0316 family.

It localises to the cell membrane. This Methanoregula boonei (strain DSM 21154 / JCM 14090 / 6A8) protein is UPF0316 protein Mboo_0791.